The primary structure comprises 278 residues: 1-acyl-sn-glycerol-3-phosphate acyltransferase beta (278 aa).

The first 23 residues, 1-23, serve as a signal peptide directing secretion; the sequence is MDPWPWLTAALLLLLLLVQLSRT. The Lumenal portion of the chain corresponds to 24 to 29; sequence ARFYAK. A helical membrane pass occupies residues 30–50; that stretch reads VGLYCVLCLSFSAAASIVCLL. Over 51–121 the chain is Cytoplasmic; it reads RHGGRTVDNM…PKRCVQIAKR (71 aa). Positions 98 to 103 match the HXXXXD motif motif; it reads HQSILD. A helical transmembrane segment spans residues 122–142; the sequence is ELMFTGPVGLIMYLGGVYFIN. Over 143 to 278 the chain is Lumenal; sequence RQQARTAMSV…IKEPGVLPAQ (136 aa). The EGTR motif motif lies at 172–175; the sequence is EGTR.

The protein belongs to the 1-acyl-sn-glycerol-3-phosphate acyltransferase family. As to expression, expressed at high levels in the liver, at intermediate levels in the kidney, gut, heart and skeletal muscles. Undetectable in brain and spleen.

The protein resides in the endoplasmic reticulum membrane. The catalysed reaction is a 1-acyl-sn-glycero-3-phosphate + an acyl-CoA = a 1,2-diacyl-sn-glycero-3-phosphate + CoA. It carries out the reaction 1-(9Z-octadecenoyl)-sn-glycero-3-phosphate + (9Z)-octadecenoyl-CoA = 1,2-di-(9Z-octadecenoyl)-sn-glycero-3-phosphate + CoA. It catalyses the reaction 1-(9Z-octadecenoyl)-sn-glycero-3-phosphate + hexadecanoyl-CoA = 1-(9Z)-octadecenoyl-2-hexadecanoyl-sn-glycero-3-phosphate + CoA. The enzyme catalyses heptadecanoyl-CoA + 1-(9Z-octadecenoyl)-sn-glycero-3-phosphate = 1-(9Z)-octadecenoyl-2-heptadecanoyl-sn-glycero-3-phosphate + CoA. The catalysed reaction is 1-(9Z-octadecenoyl)-sn-glycero-3-phosphate + (9Z,12Z)-octadecadienoyl-CoA = 1-(9Z)-octadecenoyl-2-(9Z,12Z)-octadecadienoyl-sn-glycero-3-phosphate + CoA. It carries out the reaction 1-(9Z-octadecenoyl)-sn-glycero-3-phosphate + tetradecanoyl-CoA = 1-(9Z)-octadecenoyl-2-tetradecanoyl-sn-glycero-3-phosphate + CoA. It catalyses the reaction pentadecanoyl-CoA + 1-(9Z-octadecenoyl)-sn-glycero-3-phosphate = 1-(9Z)-octadecenoyl-2-pentadecanoyl-sn-glycero-3-phosphate + CoA. The enzyme catalyses 1-hexadecanoyl-sn-glycero-3-phosphate + (9Z)-octadecenoyl-CoA = 1-hexadecanoyl-2-(9Z-octadecenoyl)-sn-glycero-3-phosphate + CoA. The catalysed reaction is 1-tetradecanoyl-sn-glycerol 3-phosphate + (9Z)-octadecenoyl-CoA = 1-tetradecanoyl-2-(9Z)-octadecenoyl-sn-glycero-3-phosphate + CoA. It carries out the reaction 1-(9Z,12Z,15Z)-octadecatrienoyl-sn-glycero-3-phosphate + (9Z)-octadecenoyl-CoA = 1-(9Z,12Z,15Z)-octadecatrienoyl-2-(9Z)-octadecenoyl-sn-glycero-3-phosphate + CoA. It catalyses the reaction 1-(6Z,9Z,12Z-octadecatrienoyl)-sn-glycero-3-phosphate + (9Z)-octadecenoyl-CoA = (6Z,9Z,12Z)-octadecatrienoyl-2-(9Z)-octadecenoyl-sn-glycero-3-phosphate + CoA. The enzyme catalyses 1-eicosanoyl-sn-glycero-3-phosphate + (9Z)-octadecenoyl-CoA = 1-eicosanoyl-2-(9Z)-octadecenoyl-sn-glycero-3-phosphate + CoA. The catalysed reaction is 1-hexadecanoyl-sn-glycero-3-phosphate + octadecanoyl-CoA = 1-hexadecanoyl-2-octadecanoyl-sn-glycero-3-phosphate + CoA. It carries out the reaction 1-hexadecanoyl-sn-glycero-3-phosphate + (5Z,8Z,11Z,14Z)-eicosatetraenoyl-CoA = 1-hexadecanoyl-2-(5Z,8Z,11Z,14Z-eicosatetraenoyl)-sn-glycero-3-phosphate + CoA. It catalyses the reaction 1-hexadecanoyl-sn-glycero-3-phosphate + hexadecanoyl-CoA = 1,2-dihexadecanoyl-sn-glycero-3-phosphate + CoA. The enzyme catalyses 1-hexadecanoyl-sn-glycero-3-phosphate + tetradecanoyl-CoA = 1-hexadecanoyl-2-tetradecanoyl-sn-glycero-3-phosphate + CoA. The catalysed reaction is (11Z)-octadecenoyl-CoA + 1-(9Z-octadecenoyl)-sn-glycero-3-phosphate = 1-(9Z)-octadecenoyl-2-(11Z)-octadecenoyl-sn-glycero-3-phosphate + CoA. Its pathway is phospholipid metabolism; CDP-diacylglycerol biosynthesis; CDP-diacylglycerol from sn-glycerol 3-phosphate: step 2/3. Functionally, converts 1-acyl-sn-glycerol-3-phosphate (lysophosphatidic acid or LPA) into 1,2-diacyl-sn-glycerol-3-phosphate (phosphatidic acid or PA) by incorporating an acyl moiety at the sn-2 position of the glycerol backbone. The polypeptide is 1-acyl-sn-glycerol-3-phosphate acyltransferase beta (Agpat2) (Mus musculus (Mouse)).